Reading from the N-terminus, the 268-residue chain is 4-hydroxy-tetrahydrodipicolinate reductase (268 aa).

Residues 8-13 (GGGGKM) and Glu34 each bind NAD(+). Residue Lys35 participates in NADP(+) binding. NAD(+) is bound by residues 98–100 (GST) and 122–125 (APNM). The Proton donor/acceptor role is filled by His155. His156 is a binding site for (S)-2,3,4,5-tetrahydrodipicolinate. Catalysis depends on Lys159, which acts as the Proton donor. Residue 165 to 166 (GT) participates in (S)-2,3,4,5-tetrahydrodipicolinate binding.

The protein belongs to the DapB family.

It localises to the cytoplasm. It carries out the reaction (S)-2,3,4,5-tetrahydrodipicolinate + NAD(+) + H2O = (2S,4S)-4-hydroxy-2,3,4,5-tetrahydrodipicolinate + NADH + H(+). It catalyses the reaction (S)-2,3,4,5-tetrahydrodipicolinate + NADP(+) + H2O = (2S,4S)-4-hydroxy-2,3,4,5-tetrahydrodipicolinate + NADPH + H(+). The protein operates within amino-acid biosynthesis; L-lysine biosynthesis via DAP pathway; (S)-tetrahydrodipicolinate from L-aspartate: step 4/4. Functionally, catalyzes the conversion of 4-hydroxy-tetrahydrodipicolinate (HTPA) to tetrahydrodipicolinate. The sequence is that of 4-hydroxy-tetrahydrodipicolinate reductase from Syntrophus aciditrophicus (strain SB).